Reading from the N-terminus, the 234-residue chain is Ribonuclease Trv (234 aa).

5 disulfide bridges follow: C5/C24, C13/C59, C23/C125, C67/C117, and C189/C224. N15 carries an N-linked (GlcNAc...) asparagine glycan. H52 is an active-site residue. N75 carries N-linked (GlcNAc...) asparagine glycosylation. Active-site residues include E110 and H114.

Belongs to the RNase T2 family.

It catalyses the reaction a ribonucleotidyl-ribonucleotide-RNA + H2O = a 3'-end 3'-phospho-ribonucleotide-RNA + a 5'-end dephospho-ribonucleoside-RNA + H(+). Its function is as follows. This is a base non-specific and adenylic acid preferential ribonuclease. In Hypocrea rufa (Trichoderma viride), this protein is Ribonuclease Trv.